The primary structure comprises 391 residues: Phosphoglycerate kinase (391 aa).

Residues 21 to 23 (DLN), R36, 59 to 62 (HLGR), R113, and R146 each bind substrate. ATP-binding positions include K197, E319, and 345–348 (GGDT).

It belongs to the phosphoglycerate kinase family. Monomer.

The protein resides in the cytoplasm. The enzyme catalyses (2R)-3-phosphoglycerate + ATP = (2R)-3-phospho-glyceroyl phosphate + ADP. It participates in carbohydrate degradation; glycolysis; pyruvate from D-glyceraldehyde 3-phosphate: step 2/5. This Xylella fastidiosa (strain 9a5c) protein is Phosphoglycerate kinase.